The following is a 1259-amino-acid chain: MGKDQELLEAARTGNVALVEKLLSGRKGGILGGGSGPLPLSNLLSIWRGPNVNCTDSSGYTALHHAALNGHKDIVLKLLQYEASTNVADNKGYFPIHLAAWKGDVEIVKILIHHGPSHSRVNEQNNENETALHCAAQYGHSEVVAVLLEELTDPTIRNSKLETPLDLAALYGRLRVVKMIISAHPNLMSCNTRKHTPLHLAARNGHKAVVQVLLEAGMDVSCQTEKGSALHEAALFGKVDVVRVLLETGIDANIKDSLGRTVLDILKEHPSQKSLQIATLLQDYLEGAGRSAAVLEEHAQEDTAQETHLSSPAESPQKTKSETVTGELSKLLDEIKLCQEKDYSFEDLCHTISDHYLDNLSKISEEELGKNGSQSVRTSSTINLSPGEVEDEEEDPNSCGPTGLWEALTPCNGCRNLGFPMLAQESYPKKRNFPMEMEPSASLDTFPSENENFLCELVDTAVTKKPCSLEIARAPSPRTDNASEVAITAPGTSHHRNSSTGPTPDCSPPSPDTALKNIVKVIRPQPKQRTSIVSSLDFQRMNHNQEYFEISTSTGCTSFTSSPAASPPTSSVETTEVKNEGAEHADDLSQQEDDEPPKEYDAGQFAGLLHGSSPACESPENPFHLYGKRNTCEDGPDEASLANSPLPFKQTPIENNPEPSVKKVKPKVVSRTIFHKRNHQLENHTIVGTRMSRSGSRNGDQWGVNPGGFVERACTLGRIRSLPKALIDMHLSKNVSKSDSDLIAYPSKDKARVNWSKSSTAERSSKDNSERTPSFTSEWEEIDKIMNSIDVGINSELEGMNGETTRPRCPVQTVGQWLESIGLPQYENHLMANGFDSVQFMGSNVMEDQDLLEIGILNSGHRQRILQAIQLLPKMRPIGHDGYHPTSVAEWLDSIELGDYTKAFLINGYTSMDLLKKIWELELINVLKISLIGHRKRILASLGDRLHDDPPQKPPRSITLREPSGNHTPPQLSPSLSQSTYTTGGSLDVPHIIMQGDARRRRNENYFDDIPRSKLERQMAQTGDWGEPSITLRPPNEATASTPVQYWQHHPEKLIFQSCDYKAFYLGSMLIKELRGTESTQDACAKMRANCRKSTEQMKKVPTIILSVSYKGVKFIDAANKNIIAEHEIRNISCAAQDPEDLSTFAYITKDLKSNHHYCHVFTAFDVNLAYEIILTLGQAFEVAYQLALQARKGGHSSTLPESFENKPSKPIPKPRVSIRKSVQIDPSEQKTLANLPWIVEPGQEAKRGINTKYETTIF.

ANK repeat units lie at residues 2 to 31 (GKDQ…GGIL), 58 to 87 (SGYT…STNV), 91 to 120 (KGYF…SHSR), 127 to 156 (ENET…DPTI), 160 to 189 (KLET…NLMS), 193 to 222 (RKHT…DVSC), and 225 to 254 (EKGS…DANI). A disordered region spans residues 298–325 (HAQEDTAQETHLSSPAESPQKTKSETVT). Residues 306–325 (ETHLSSPAESPQKTKSETVT) are compositionally biased toward polar residues. 5 positions are modified to phosphoserine: serine 310, serine 311, serine 315, serine 353, and serine 364. Disordered regions lie at residues 367–401 (ELGK…SCGP), 490–513 (PGTS…SPDT), 556–614 (CTSF…GSSP), and 631–661 (TCED…EPSV). A compositionally biased stretch (polar residues) spans 371–384 (NGSQSVRTSSTINL). The residue at position 503 (threonine 503) is a Phosphothreonine. 2 positions are modified to phosphoserine: serine 507 and serine 510. Over residues 556-574 (CTSFTSSPAASPPTSSVET) the composition is skewed to low complexity. Over residues 575–587 (TEVKNEGAEHADD) the composition is skewed to basic and acidic residues. The residue at position 738 (serine 738) is a Phosphoserine. Positions 753-776 (VNWSKSSTAERSSKDNSERTPSFT) are disordered. Threonine 772 bears the Phosphothreonine mark. Serine 774 is subject to Phosphoserine. SAM domains are found at residues 809-875 (CPVQ…LPKM) and 883-948 (YHPT…RLHD). The residue at position 900 (tyrosine 900) is a Phosphotyrosine. A short sequence motif (nuclear localization signal) is located at residue histidine 934. Positions 943–988 (GDRLHDDPPQKPPRSITLREPSGNHTPPQLSPSLSQSTYTTGGSLD) are disordered. Residues 968–983 (TPPQLSPSLSQSTYTT) are compositionally biased toward low complexity. A Phosphoserine modification is found at serine 973. A Phosphotyrosine modification is found at tyrosine 1006. Positions 1055–1212 (IFQSCDYKAF…SFENKPSKPI (158 aa)) constitute a PID domain. A disordered region spans residues 1196–1216 (HSSTLPESFENKPSKPIPKPR).

Interacts with EPHA8. Isoform 2 interacts with COIL.

It is found in the cytoplasm. The protein localises to the nucleus. It localises to the postsynaptic density. The protein resides in the cell projection. Its subcellular location is the dendritic spine. In terms of biological role, isoform 2 may participate in the regulation of nucleoplasmic coilin protein interactions in neuronal and transformed cells. In Mus musculus (Mouse), this protein is Ankyrin repeat and sterile alpha motif domain-containing protein 1B (Anks1b).